The sequence spans 141 residues: Nucleoside diphosphate kinase (141 aa).

ATP contacts are provided by lysine 11, phenylalanine 59, arginine 87, threonine 93, arginine 104, and asparagine 114. The Pros-phosphohistidine intermediate role is filled by histidine 117.

It belongs to the NDK family. In terms of assembly, homotetramer. It depends on Mg(2+) as a cofactor.

The protein localises to the cytoplasm. It carries out the reaction a 2'-deoxyribonucleoside 5'-diphosphate + ATP = a 2'-deoxyribonucleoside 5'-triphosphate + ADP. It catalyses the reaction a ribonucleoside 5'-diphosphate + ATP = a ribonucleoside 5'-triphosphate + ADP. Functionally, major role in the synthesis of nucleoside triphosphates other than ATP. The ATP gamma phosphate is transferred to the NDP beta phosphate via a ping-pong mechanism, using a phosphorylated active-site intermediate. This is Nucleoside diphosphate kinase from Legionella pneumophila subsp. pneumophila (strain Philadelphia 1 / ATCC 33152 / DSM 7513).